The sequence spans 64 residues: Movement protein TGBp3 (64 aa).

Residues 1-4 (MRSV) lie on the Lumenal side of the membrane. Residues 5–27 (ALTLCAIIAGYLLVSNLQNVFSP) form a helical membrane-spanning segment. The Cytoplasmic portion of the chain corresponds to 28–64 (EVCTLVITGESIRINGCNLSPAHFRAISHLKVLQIHL).

The protein belongs to the Tymovirales TGBp3 protein family.

The protein resides in the host endoplasmic reticulum membrane. Plays a role in viral cell-to-cell propagation, by facilitating genome transport to neighboring plant cells through plasmosdesmata. May induce the formation of granular vesicles derived from the Endoplasmic reticulum, which align on actin filaments. This chain is Movement protein TGBp3, found in Lily symptomless virus (LSV).